Reading from the N-terminus, the 263-residue chain is Versicolorin reductase 1 (263 aa).

4 residues coordinate NADP(+): isoleucine 22, aspartate 68, asparagine 95, and arginine 128. Active-site proton donor residues include serine 144 and serine 145. Tyrosine 159, lysine 163, isoleucine 192, and threonine 194 together coordinate NADP(+). Tyrosine 159 (proton acceptor) is an active-site residue. Residue lysine 163 is the Lowers pKa of active site Tyr of the active site.

It belongs to the short-chain dehydrogenases/reductases (SDR) family.

The protein resides in the cytoplasm. It localises to the cytosol. It participates in mycotoxin biosynthesis. Functionally, versicolorin reductase; part of the fragmented gene cluster that mediates the biosynthesis of dothistromin (DOTH), a polyketide toxin very similar in structure to the aflatoxin precursor, versicolorin B. The first step of the pathway is the conversion of acetate to norsolorinic acid (NOR) and requires the fatty acid synthase subunits hexA and hexB, as well as the polyketide synthase pksA. PksA combines a hexanoyl starter unit and 7 malonyl-CoA extender units to synthesize the precursor NOR. The hexanoyl starter unit is provided to the acyl-carrier protein (ACP) domain by the fungal fatty acid synthase hexA/hexB. The second step is the conversion of NOR to averantin (AVN) and requires the norsolorinic acid ketoreductase nor1, which catalyzes the dehydration of norsolorinic acid to form (1'S)-averantin. The cytochrome P450 monooxygenase avnA then catalyzes the hydroxylation of AVN to 5'hydroxyaverantin (HAVN). The next step is performed by adhA that transforms HAVN to averufin (AVF). Averufin might then be converted to hydroxyversicolorone by cypX and avfA. Hydroxyversicolorone is further converted versiconal hemiacetal acetate (VHA) by moxY. VHA is then the substrate for the versiconal hemiacetal acetate esterase est1 to yield versiconal (VAL). Versicolorin B synthase vbsA then converts VAL to versicolorin B (VERB) by closing the bisfuran ring. Then, the activity of the versicolorin B desaturase verB leads to versicolorin A (VERA). DotB, a predicted chloroperoxidase, may perform epoxidation of the A-ring of VERA. Alternatively, a cytochrome P450, such as cypX or avnA could catalyze this step. It is also possible that another, uncharacterized, cytochrome P450 enzyme is responsible for this step. Opening of the epoxide could potentially be achieved by the epoxide hydrolase epoA. However, epoA seems not to be required for DOTH biosynthesis, but other epoxide hydrolases may have the ability to complement this hydrolysis. Alternatively, opening of the epoxide ring could be achieved non-enzymatically. The next step is the deoxygenation of ring A to yield the 5,8-dihydroxyanthraquinone which is most likely catalyzed by the NADPH dehydrogenase encoded by ver1. The last stages of DOTH biosynthesis are proposed to involve hydroxylation of the bisfuran. OrdB and norB might have oxidative roles here. An alternative possibility is that cytochrome P450 monoogenases such as avnA and cypX might perform these steps in addition to previously proposed steps. In Dothistroma septosporum (Red band needle blight fungus), this protein is Versicolorin reductase 1.